The primary structure comprises 564 residues: Keratin, type II cytoskeletal 6C (564 aa).

Low complexity predominate over residues 1 to 11 (MASTSTTIRSH). Residues 1-23 (MASTSTTIRSHSSSRRGFSANSA) form a disordered region. Alanine 2 is subject to N-acetylalanine. The head stretch occupies residues 2–162 (ASTSTTIRSH…DPAIQRVRAE (161 aa)). Serine 60 carries the phosphoserine modification. The interval 163–198 (EREQIKTLNNKFASFIDKVRFLEQQNKVLDTKWTLL) is coil 1A. One can recognise an IF rod domain in the interval 163–476 (EREQIKTLNN…KLLEGEECRL (314 aa)). The tract at residues 199 to 217 (QEQGTKTVRQNLEPLFEQY) is linker 1. The segment at 218 to 309 (INNLRRQLDS…ALYDAELSQM (92 aa)) is coil 1B. Residues 310 to 333 (QTHISDTSVVLSMDNNRNLDLDSI) are linker 12. A coil 2 region spans residues 334-472 (IAEVKAQYEE…ATYRKLLEGE (139 aa)). The tract at residues 473 to 564 (ECRLNGEGVG…SSSSRKSYKH (92 aa)) is tail.

It belongs to the intermediate filament family. Heterodimer of a type I and a type II keratin. KRT6 isomers associate with KRT16 and/or KRT17. As to expression, constitutively expressed in distinct types of epithelia such as those in oral mucosa, esophagus, papillae of tongue and hair follicle outer root sheath.

The chain is Keratin, type II cytoskeletal 6C (KRT6C) from Homo sapiens (Human).